The sequence spans 326 residues: tRNA-modifying protein YgfZ (326 aa).

Positions 27 and 189 each coordinate folate.

This sequence belongs to the tRNA-modifying YgfZ family.

The protein localises to the cytoplasm. Folate-binding protein involved in regulating the level of ATP-DnaA and in the modification of some tRNAs. It is probably a key factor in regulatory networks that act via tRNA modification, such as initiation of chromosomal replication. This chain is tRNA-modifying protein YgfZ, found in Escherichia coli (strain SE11).